A 414-amino-acid polypeptide reads, in one-letter code: Glutamyl-tRNA reductase (414 aa).

Residues 47 to 50, S106, 111 to 113, and Q117 each bind substrate; these read TCNR and EAQ. C48 functions as the Nucleophile in the catalytic mechanism. 185-190 contacts NADP(+); that stretch reads GAGRTG.

This sequence belongs to the glutamyl-tRNA reductase family. In terms of assembly, homodimer.

It carries out the reaction (S)-4-amino-5-oxopentanoate + tRNA(Glu) + NADP(+) = L-glutamyl-tRNA(Glu) + NADPH + H(+). The protein operates within porphyrin-containing compound metabolism; protoporphyrin-IX biosynthesis; 5-aminolevulinate from L-glutamyl-tRNA(Glu): step 1/2. In terms of biological role, catalyzes the NADPH-dependent reduction of glutamyl-tRNA(Glu) to glutamate 1-semialdehyde (GSA). The polypeptide is Glutamyl-tRNA reductase (Herpetosiphon aurantiacus (strain ATCC 23779 / DSM 785 / 114-95)).